A 124-amino-acid chain; its full sequence is Small ribosomal subunit protein uS12 (124 aa).

D89 is subject to 3-methylthioaspartic acid.

The protein belongs to the universal ribosomal protein uS12 family. In terms of assembly, part of the 30S ribosomal subunit. Contacts proteins S8 and S17. May interact with IF1 in the 30S initiation complex.

Functionally, with S4 and S5 plays an important role in translational accuracy. Its function is as follows. Interacts with and stabilizes bases of the 16S rRNA that are involved in tRNA selection in the A site and with the mRNA backbone. Located at the interface of the 30S and 50S subunits, it traverses the body of the 30S subunit contacting proteins on the other side and probably holding the rRNA structure together. The combined cluster of proteins S8, S12 and S17 appears to hold together the shoulder and platform of the 30S subunit. This chain is Small ribosomal subunit protein uS12, found in Pectobacterium atrosepticum (strain SCRI 1043 / ATCC BAA-672) (Erwinia carotovora subsp. atroseptica).